We begin with the raw amino-acid sequence, 1384 residues long: DNA-directed RNA polymerase subunit beta' (1384 aa).

Zn(2+) is bound by residues Cys-81, Cys-83, Cys-96, and Cys-99. Residues Asp-472, Asp-474, and Asp-476 each contribute to the Mg(2+) site.

It belongs to the RNA polymerase beta' chain family. The RNAP catalytic core consists of 2 alpha, 1 beta, 1 beta' and 1 omega subunit. When a sigma factor is associated with the core the holoenzyme is formed, which can initiate transcription. Mg(2+) serves as cofactor. It depends on Zn(2+) as a cofactor.

It catalyses the reaction RNA(n) + a ribonucleoside 5'-triphosphate = RNA(n+1) + diphosphate. Its function is as follows. DNA-dependent RNA polymerase catalyzes the transcription of DNA into RNA using the four ribonucleoside triphosphates as substrates. This is DNA-directed RNA polymerase subunit beta' from Opitutus terrae (strain DSM 11246 / JCM 15787 / PB90-1).